Reading from the N-terminus, the 473-residue chain is Arginine biosynthesis bifunctional protein ArgJ, mitochondrial (473 aa).

Residues Thr201, Lys230, Thr241, Glu328, Asn468, and Thr473 each contribute to the substrate site. Thr241 serves as the catalytic Nucleophile.

The protein belongs to the ArgJ family. Heterodimer of an alpha and a beta chain. The alpha and beta chains are autoproteolytically processed from a single precursor protein within the mitochondrion.

It localises to the mitochondrion matrix. The enzyme catalyses N(2)-acetyl-L-ornithine + L-glutamate = N-acetyl-L-glutamate + L-ornithine. It carries out the reaction L-glutamate + acetyl-CoA = N-acetyl-L-glutamate + CoA + H(+). The protein operates within amino-acid biosynthesis; L-arginine biosynthesis; L-ornithine and N-acetyl-L-glutamate from L-glutamate and N(2)-acetyl-L-ornithine (cyclic): step 1/1. It functions in the pathway amino-acid biosynthesis; L-arginine biosynthesis; N(2)-acetyl-L-ornithine from L-glutamate: step 1/4. Functionally, catalyzes two activities which are involved in the cyclic version of arginine biosynthesis: the synthesis of acetylglutamate from glutamate and acetyl-CoA, and of ornithine by transacetylation between acetylornithine and glutamate. The polypeptide is Arginine biosynthesis bifunctional protein ArgJ, mitochondrial (Paracoccidioides brasiliensis (strain Pb18)).